The primary structure comprises 953 residues: 26S proteasome non-ATPase regulatory subunit 1 (953 aa).

Met1 carries the post-translational modification N-acetylmethionine; partial. Thr273 carries the phosphothreonine modification. A disordered region spans residues 279–318 (PGSTNTGTVPGSEKDSDSMETEEKTGSAFVGKTPEASPEP). Residue Ser290 is modified to Phosphoserine. Over residues 290 to 303 (SEKDSDSMETEEKT) the composition is skewed to basic and acidic residues. Lys310 is modified (N6-acetyllysine). Thr311 bears the Phosphothreonine mark. Ser315 bears the Phosphoserine mark. 10 PC repeats span residues 403 to 436 (TATA…PGSA), 441 to 474 (GGLY…DIVR), 476 to 510 (GGSL…VTGE), 511 to 545 (AAGL…EKIL), 547 to 580 (GLAV…ILRR), 581 to 616 (SGMY…DVRR), 617 to 649 (AAVE…PHVR), 651 to 685 (GAAM…YVRQ), 686 to 726 (GALI…DVMA), and 729 to 761 (GAIL…PSVV). Lys720 is subject to N6-acetyllysine. The residue at position 830 (Thr830) is a Phosphothreonine. Ser834 is modified (phosphoserine). Disordered regions lie at residues 839–881 (AKKK…LDNP) and 930–953 (AHGP…YIDD). 2 stretches are compositionally biased toward basic and acidic residues: residues 842-852 (KEKEKEKKEEE) and 859-872 (AEKK…KEPE). A compositionally biased stretch (acidic residues) spans 936–953 (EEEEQEPEPPEPFEYIDD).

This sequence belongs to the proteasome subunit S1 family. In terms of assembly, component of the 19S proteasome regulatory particle complex. The 26S proteasome consists of a 20S core particle (CP) and two 19S regulatory subunits (RP). The regulatory particle is made of a lid composed of 9 subunits, a base containing 6 ATPases and few additional components including PSMD1. Interacts with ADRM1. Interacts with ZFAND1.

Functionally, component of the 26S proteasome, a multiprotein complex involved in the ATP-dependent degradation of ubiquitinated proteins. This complex plays a key role in the maintenance of protein homeostasis by removing misfolded or damaged proteins, which could impair cellular functions, and by removing proteins whose functions are no longer required. Therefore, the proteasome participates in numerous cellular processes, including cell cycle progression, apoptosis, or DNA damage repair. The protein is 26S proteasome non-ATPase regulatory subunit 1 (PSMD1) of Pongo abelii (Sumatran orangutan).